A 687-amino-acid chain; its full sequence is Polyphosphate kinase (687 aa).

ATP is bound at residue Asn-45. Positions 375 and 405 each coordinate Mg(2+). The active-site Phosphohistidine intermediate is His-435. Tyr-472, Arg-568, and His-596 together coordinate ATP.

Belongs to the polyphosphate kinase 1 (PPK1) family. It depends on Mg(2+) as a cofactor. An intermediate of this reaction is the autophosphorylated ppk in which a phosphate is covalently linked to a histidine residue through a N-P bond.

The enzyme catalyses [phosphate](n) + ATP = [phosphate](n+1) + ADP. Functionally, catalyzes the reversible transfer of the terminal phosphate of ATP to form a long-chain polyphosphate (polyP). The sequence is that of Polyphosphate kinase from Burkholderia ambifaria (strain ATCC BAA-244 / DSM 16087 / CCUG 44356 / LMG 19182 / AMMD) (Burkholderia cepacia (strain AMMD)).